The chain runs to 70 residues: Large ribosomal subunit protein eL38 (70 aa).

This sequence belongs to the eukaryotic ribosomal protein eL38 family.

This chain is Large ribosomal subunit protein eL38 (RpL38), found in Julodis onopordi (Jewel beetle).